The following is a 204-amino-acid chain: Peroxynitrite isomerase (204 aa).

The GXWXGXG motif lies at 21 to 27; sequence GEWEGSG. Histidine 195 is a heme b binding site.

The protein belongs to the nitrobindin family. Homodimer. The cofactor is heme b.

It carries out the reaction peroxynitrite = nitrate. It participates in nitrogen metabolism. In terms of biological role, heme-binding protein able to scavenge peroxynitrite and to protect free L-tyrosine against peroxynitrite-mediated nitration, by acting as a peroxynitrite isomerase that converts peroxynitrite to nitrate. Therefore, this protein likely plays a role in peroxynitrite sensing and in the detoxification of reactive nitrogen and oxygen species (RNS and ROS, respectively). Is able to bind nitric oxide (NO) in vitro, but may act as a sensor of peroxynitrite levels in vivo. This chain is Peroxynitrite isomerase, found in Arthrobacter sp. (strain FB24).